The sequence spans 905 residues: Patched domain-containing protein 3 (905 aa).

The interval 1–67 (MISSKVAPGE…PVGQEAPPPR (67 aa)) is disordered. A helical transmembrane segment spans residues 94–114 (WLFLLGPVLLTASLGTGLIFL). Asparagine 146, asparagine 199, asparagine 229, and asparagine 233 each carry an N-linked (GlcNAc...) asparagine glycan. Helical transmembrane passes span 337 to 357 (TVIP…VVSC), 369 to 389 (VAVF…GLML), 391 to 411 (IGVP…GVGV), 441 to 461 (VAVS…TGIT), 475 to 495 (GTTL…IMAL), and 558 to 578 (FIVV…CFQV). Residues 338-495 (VIPLFHLAYI…ITCFGAIMAL (158 aa)) enclose the SSD domain. Asparagine 647, asparagine 661, and asparagine 692 each carry an N-linked (GlcNAc...) asparagine glycan. 5 helical membrane passes run 759 to 779 (VMIA…HPVC), 781 to 801 (LWVT…MAFW), 813 to 833 (LVIC…AFVS), 849 to 869 (LLGY…CVLA), and 882 to 902 (IMFL…PVFL).

This sequence belongs to the patched family. Expressed in germ cells of the testis (at protein level).

The protein resides in the cell projection. It is found in the cilium. It localises to the flagellum membrane. The protein localises to the endoplasmic reticulum membrane. Functionally, may play a role in sperm development or sperm function. However, does not appear to have an essential role in spermatogenesis or male fertility. This Rattus norvegicus (Rat) protein is Patched domain-containing protein 3.